The primary structure comprises 202 residues: Putative NADH dehydrogenase/NAD(P)H nitroreductase SCO7141 (202 aa).

The protein belongs to the nitroreductase family. HadB/RutE subfamily. FMN is required as a cofactor.

The sequence is that of Putative NADH dehydrogenase/NAD(P)H nitroreductase SCO7141 from Streptomyces coelicolor (strain ATCC BAA-471 / A3(2) / M145).